Reading from the N-terminus, the 139-residue chain is Cytochrome c2 (139 aa).

An N-terminal signal peptide occupies residues 1–25 (MVKKLLTILSIAATAGSLSIGTASA). Position 26 is a pyrrolidone carboxylic acid (Gln26). Residues Cys38, Cys41, His42, and Met118 each coordinate heme c.

This sequence belongs to the cytochrome c family. Post-translationally, binds 1 heme c group covalently per subunit.

Its function is as follows. Cytochrome c2 is found mainly in purple, non-sulfur, photosynthetic bacteria where it functions as the electron donor to the oxidized bacteriochlorophyll in the photophosphorylation pathway. However, it may also have a role in the respiratory chain and is found in some non-photosynthetic bacteria. The chain is Cytochrome c2 (cycA) from Rhodopseudomonas palustris (strain ATCC BAA-98 / CGA009).